A 508-amino-acid polypeptide reads, in one-letter code: ATP synthase subunit alpha (508 aa).

170 to 177 serves as a coordination point for ATP; it reads GDRQTGKT.

The protein belongs to the ATPase alpha/beta chains family. In terms of assembly, F-type ATPases have 2 components, CF(1) - the catalytic core - and CF(0) - the membrane proton channel. CF(1) has five subunits: alpha(3), beta(3), gamma(1), delta(1), epsilon(1). CF(0) has three main subunits: a(1), b(2) and c(9-12). The alpha and beta chains form an alternating ring which encloses part of the gamma chain. CF(1) is attached to CF(0) by a central stalk formed by the gamma and epsilon chains, while a peripheral stalk is formed by the delta and b chains.

Its subcellular location is the cell inner membrane. The catalysed reaction is ATP + H2O + 4 H(+)(in) = ADP + phosphate + 5 H(+)(out). Produces ATP from ADP in the presence of a proton gradient across the membrane. The alpha chain is a regulatory subunit. This is ATP synthase subunit alpha from Dictyoglomus turgidum (strain DSM 6724 / Z-1310).